The chain runs to 248 residues: Inner membrane protein pE248R (248 aa).

A lipid anchor (N-myristoyl glycine; by host) is attached at G2. At G2–N199 the chain is on the cytoplasmic side. The chain crosses the membrane as a helical span at residues I200–F220. Over L221 to S248 the chain is Extracellular.

Belongs to the asfivirus E248R family. In terms of assembly, interacts with A151R.

Its subcellular location is the host membrane. It localises to the virion membrane. Its function is as follows. Essential for viral fusion with host endosomal membrane and core release. This is Inner membrane protein pE248R from Ornithodoros (relapsing fever ticks).